The primary structure comprises 291 residues: Cilia- and flagella-associated protein 298 (291 aa).

Belongs to the CFAP298 family.

The protein is Cilia- and flagella-associated protein 298 of Drosophila melanogaster (Fruit fly).